Consider the following 573-residue polypeptide: Urease subunit alpha 2 (573 aa).

Residues 136–573 (GAIDAHVHLI…LPMAQRYFLF (438 aa)) enclose the Urease domain. Residues histidine 141, histidine 143, and lysine 224 each contribute to the Ni(2+) site. Lysine 224 is modified (N6-carboxylysine). Residue histidine 226 participates in substrate binding. The Ni(2+) site is built by histidine 253 and histidine 279. Histidine 327 acts as the Proton donor in catalysis. Residue aspartate 367 participates in Ni(2+) binding.

It belongs to the metallo-dependent hydrolases superfamily. Urease alpha subunit family. In terms of assembly, may form a heterohexamer of 3 UreC (alpha) and 3 UreAB (gamma/beta) subunits. May also form a heterotrimer of UreA (gamma), UreB (beta) and UreC (alpha) subunits. Three heterotrimers associate to form the active enzyme. Ni cation serves as cofactor. In terms of processing, carboxylation allows a single lysine to coordinate two nickel ions.

It localises to the cytoplasm. The catalysed reaction is urea + 2 H2O + H(+) = hydrogencarbonate + 2 NH4(+). Its pathway is nitrogen metabolism; urea degradation; CO(2) and NH(3) from urea (urease route): step 1/1. The sequence is that of Urease subunit alpha 2 from Streptomyces avermitilis (strain ATCC 31267 / DSM 46492 / JCM 5070 / NBRC 14893 / NCIMB 12804 / NRRL 8165 / MA-4680).